We begin with the raw amino-acid sequence, 317 residues long: Putative 12-oxophytodienoate reductase 10 (317 aa).

FMN is bound at residue 26–28 (PVG). 117–120 (HGAN) contacts substrate. Tyr122 functions as the Proton donor in the catalytic mechanism. Residue Arg169 coordinates FMN. Arg209 is a binding site for substrate. FMN is bound by residues Gly244 and 265-266 (GR).

This sequence belongs to the NADH:flavin oxidoreductase/NADH oxidase family. It depends on FMN as a cofactor.

Functionally, putative oxophytodienoate reductase that may be involved in the biosynthesis or metabolism of oxylipin signaling molecules. The chain is Putative 12-oxophytodienoate reductase 10 (OPR10) from Oryza sativa subsp. japonica (Rice).